The sequence spans 203 residues: Orotate phosphoribosyltransferase (203 aa).

5-phospho-alpha-D-ribose 1-diphosphate is bound by residues Arg-94, Lys-98, His-100, and 120–128; that span reads EDLISTGGS. Ser-124 contacts orotate.

It belongs to the purine/pyrimidine phosphoribosyltransferase family. PyrE subfamily. Homodimer. Mg(2+) serves as cofactor.

It catalyses the reaction orotidine 5'-phosphate + diphosphate = orotate + 5-phospho-alpha-D-ribose 1-diphosphate. It functions in the pathway pyrimidine metabolism; UMP biosynthesis via de novo pathway; UMP from orotate: step 1/2. Catalyzes the transfer of a ribosyl phosphate group from 5-phosphoribose 1-diphosphate to orotate, leading to the formation of orotidine monophosphate (OMP). This chain is Orotate phosphoribosyltransferase, found in Staphylococcus aureus (strain MSSA476).